A 238-amino-acid polypeptide reads, in one-letter code: Cysteine-rich venom protein pseudechetoxin-like (238 aa).

The first 19 residues, 1–19 (MIAFIVLLSLAAVLQQSSG), serve as a signal peptide directing secretion. Residues 20-28 (TVDFASESS) constitute a propeptide that is removed on maturation. The region spanning 38–164 (VDKHNALRRS…STKYLYVCQY (127 aa)) is the SCP domain. Intrachain disulfides connect Cys75-Cys153, Cys92-Cys165, Cys148-Cys162, Cys184-Cys191, Cys187-Cys196, Cys200-Cys233, Cys209-Cys227, and Cys218-Cys231. One can recognise a ShKT domain in the interval 200-233 (CKHEDDFSNCKALAKNSKCQTAWIKSKCPATCFC).

The protein belongs to the CRISP family. Expressed by the venom gland.

It localises to the secreted. Functionally, blocks olfactory (CNGA2) and retinal (CNGA1) CNG channel currents. Does not affect neither depolarization- nor caffeine-induced contraction of smooth muscle. This Hoplocephalus stephensii (Stephens's banded snake) protein is Cysteine-rich venom protein pseudechetoxin-like.